The primary structure comprises 305 residues: Acetyl-coenzyme A carboxylase carboxyl transferase subunit beta (305 aa).

Residues 27 to 296 (LWVKCSACRE…PAAKADLAAR (270 aa)) enclose the CoA carboxyltransferase N-terminal domain. Cysteine 31, cysteine 34, cysteine 50, and cysteine 53 together coordinate Zn(2+). The C4-type zinc finger occupies 31–53 (CSACRELIYKKQLNDNLKVCPKC).

The protein belongs to the AccD/PCCB family. In terms of assembly, acetyl-CoA carboxylase is a heterohexamer composed of biotin carboxyl carrier protein (AccB), biotin carboxylase (AccC) and two subunits each of ACCase subunit alpha (AccA) and ACCase subunit beta (AccD). Requires Zn(2+) as cofactor.

The protein resides in the cytoplasm. It carries out the reaction N(6)-carboxybiotinyl-L-lysyl-[protein] + acetyl-CoA = N(6)-biotinyl-L-lysyl-[protein] + malonyl-CoA. It functions in the pathway lipid metabolism; malonyl-CoA biosynthesis; malonyl-CoA from acetyl-CoA: step 1/1. Component of the acetyl coenzyme A carboxylase (ACC) complex. Biotin carboxylase (BC) catalyzes the carboxylation of biotin on its carrier protein (BCCP) and then the CO(2) group is transferred by the transcarboxylase to acetyl-CoA to form malonyl-CoA. This Chloroflexus aggregans (strain MD-66 / DSM 9485) protein is Acetyl-coenzyme A carboxylase carboxyl transferase subunit beta.